The chain runs to 195 residues: HTH-type transcriptional regulator BetI (195 aa).

Residues 8–68 (EIRRAQLIDA…ATMRHVLRDL (61 aa)) form the HTH tetR-type domain. The H-T-H motif DNA-binding region spans 31–50 (TLASVAQRASISTGIVSHYF).

It participates in amine and polyamine biosynthesis; betaine biosynthesis via choline pathway [regulation]. Repressor involved in the biosynthesis of the osmoprotectant glycine betaine. It represses transcription of the choline transporter BetT and the genes of BetAB involved in the synthesis of glycine betaine. The sequence is that of HTH-type transcriptional regulator BetI from Paraburkholderia xenovorans (strain LB400).